The chain runs to 84 residues: Toxin Cll9 (84 aa).

The signal sequence occupies residues 1–19; sequence MNSLLMITACLILIGTVWA. The LCN-type CS-alpha/beta domain occupies 20–83; the sequence is EDGYLFDKRK…ISRTPGKTCK (64 aa). Cystine bridges form between C31/C82, C35/C58, C44/C63, and C48/C65.

Expressed by the venom gland.

It localises to the secreted. In terms of biological role, beta toxins bind voltage-independently at site-4 of sodium channels (Nav) and shift the voltage of activation toward more negative potentials thereby affecting sodium channel activation and promoting spontaneous and repetitive firing. Has some action on peripheral ganglia, but not on other sodium channels such as those from cerebellum granular cells in culture. Induces sleep, suggesting a strong antiepileptic action. This Centruroides limpidus (Mexican scorpion) protein is Toxin Cll9.